The sequence spans 424 residues: Glutamate-1-semialdehyde 2,1-aminomutase (424 aa).

Lys-263 is modified (N6-(pyridoxal phosphate)lysine).

This sequence belongs to the class-III pyridoxal-phosphate-dependent aminotransferase family. HemL subfamily. In terms of assembly, homodimer. Pyridoxal 5'-phosphate is required as a cofactor.

The protein localises to the cytoplasm. The catalysed reaction is (S)-4-amino-5-oxopentanoate = 5-aminolevulinate. It participates in porphyrin-containing compound metabolism; protoporphyrin-IX biosynthesis; 5-aminolevulinate from L-glutamyl-tRNA(Glu): step 2/2. The sequence is that of Glutamate-1-semialdehyde 2,1-aminomutase from Campylobacter jejuni subsp. jejuni serotype O:2 (strain ATCC 700819 / NCTC 11168).